A 158-amino-acid polypeptide reads, in one-letter code: Phosphopantetheine adenylyltransferase (158 aa).

Position 10 (threonine 10) interacts with substrate. ATP is bound by residues 10 to 11 (TF) and histidine 18. Lysine 42, leucine 74, and arginine 88 together coordinate substrate. ATP contacts are provided by residues 89-91 (GLR), glutamate 99, and 124-130 (NSFISST).

Belongs to the bacterial CoaD family. As to quaternary structure, homohexamer. Mg(2+) serves as cofactor.

It localises to the cytoplasm. The catalysed reaction is (R)-4'-phosphopantetheine + ATP + H(+) = 3'-dephospho-CoA + diphosphate. Its pathway is cofactor biosynthesis; coenzyme A biosynthesis; CoA from (R)-pantothenate: step 4/5. Functionally, reversibly transfers an adenylyl group from ATP to 4'-phosphopantetheine, yielding dephospho-CoA (dPCoA) and pyrophosphate. The polypeptide is Phosphopantetheine adenylyltransferase (Shewanella loihica (strain ATCC BAA-1088 / PV-4)).